The chain runs to 251 residues: Ribosome maturation factor RimP (251 aa).

The tract at residues 176–251 is disordered; that stretch reads SLRRGSAPPQ…ARLKNRDTLH (76 aa). Over residues 186-196 the composition is skewed to acidic residues; it reads DGEEGDEEEGA. Residues 216 to 226 are compositionally biased toward basic and acidic residues; the sequence is PKLDKKSDKPV.

It belongs to the RimP family.

It localises to the cytoplasm. Its function is as follows. Required for maturation of 30S ribosomal subunits. This Methylorubrum extorquens (strain PA1) (Methylobacterium extorquens) protein is Ribosome maturation factor RimP.